The following is a 42-amino-acid chain: Photosystem I reaction center subunit IX (42 aa).

The helical transmembrane segment at 7–27 threads the bilayer; it reads FLSLGPVLLVLWLSVQATLLI.

Belongs to the PsaJ family.

The protein resides in the cellular thylakoid membrane. Functionally, may help in the organization of the PsaE and PsaF subunits. The chain is Photosystem I reaction center subunit IX from Gloeothece citriformis (strain PCC 7424) (Cyanothece sp. (strain PCC 7424)).